The following is a 67-amino-acid chain: DNA-directed RNA polymerase subunit omega (67 aa).

It belongs to the RNA polymerase subunit omega family. In terms of assembly, the RNAP catalytic core consists of 2 alpha, 1 beta, 1 beta' and 1 omega subunit. When a sigma factor is associated with the core the holoenzyme is formed, which can initiate transcription.

It carries out the reaction RNA(n) + a ribonucleoside 5'-triphosphate = RNA(n+1) + diphosphate. In terms of biological role, promotes RNA polymerase assembly. Latches the N- and C-terminal regions of the beta' subunit thereby facilitating its interaction with the beta and alpha subunits. The sequence is that of DNA-directed RNA polymerase subunit omega from Burkholderia ambifaria (strain MC40-6).